Consider the following 146-residue polypeptide: Small ribosomal subunit protein bS6 (146 aa).

The segment at 94–146 (GPITTPSPMMQEGKSRPPHSSDEDSENTAPAKAKTADSPGEDTRTTEESDPKP) is disordered. Composition is skewed to basic and acidic residues over residues 106–115 (GKSRPPHSSD) and 134–146 (EDTRTTEESDPKP).

Belongs to the bacterial ribosomal protein bS6 family.

Binds together with bS18 to 16S ribosomal RNA. The sequence is that of Small ribosomal subunit protein bS6 from Nitrosomonas europaea (strain ATCC 19718 / CIP 103999 / KCTC 2705 / NBRC 14298).